A 443-amino-acid polypeptide reads, in one-letter code: Frizzled/smoothened-like sans CRD protein E (443 aa).

The N-terminal stretch at 1 to 23 (MISHIKKFINLYTIVFLLYILYS) is a signal peptide. The Extracellular portion of the chain corresponds to 24–83 (NENFFVKGQKLPPGFCPSPLIYRNTTDRQSDIDIGFQFLGETNCVQPCPSLILTENEWNK). N-linked (GlcNAc...) asparagine glycosylation is present at asparagine 47. Residues 84–104 (VFNMSLVAGTISMFALIFLII) traverse the membrane as a helical segment. Over 105–120 (TYSPLVNNIKDYTRHT) the chain is Cytoplasmic. The chain crosses the membrane as a helical span at residues 121 to 141 (VGILFLFSGILIAMTTDGRQL). Over 142 to 166 (WDIDLGFKKYCPEPGRFARQSDSKC) the chain is Extracellular. Residues 167–187 (LVTAIFFQFGCVTALLWWAAI) traverse the membrane as a helical segment. The Cytoplasmic segment spans residues 188–203 (SVDLWITIKKIKISKK). A helical membrane pass occupies residues 204-224 (LFIIYTIAVNIVTIVLTFGPV). The Extracellular portion of the chain corresponds to 225–248 (GSKQYGYIDAAIGCWLMDLKYQVG). A helical transmembrane segment spans residues 249–269 (YFWAPVGFCLCVGCVSIVLIL). At 270 to 289 (KEIYNVSDAVKKKLLAKHLK) the chain is on the cytoplasmic side. The chain crosses the membrane as a helical span at residues 290–310 (PLMLIILMLTEFIYMFIFYSY). The Extracellular segment spans residues 311–350 (TTSKKNHYHDIIEEYVVCLFVHAANPSVCKIGSTISPSAH). Residues 351-371 (FFFHLCIRLMGLEVLIFYGFT) traverse the membrane as a helical segment. Residues 372–443 (RQTRKIWMRS…SGIDDSKHDP (72 aa)) lie on the Cytoplasmic side of the membrane. Composition is skewed to low complexity over residues 397–410 (SSSNDSKSSNNKTS) and 419–432 (ESSEQSNEPEQSIE). A disordered region spans residues 397–443 (SSSNDSKSSNNKTSGRVTGGFGESSEQSNEPEQSIELSGIDDSKHDP).

It belongs to the G-protein coupled receptor Fz/Smo family.

It is found in the membrane. This is Frizzled/smoothened-like sans CRD protein E (fscE) from Dictyostelium discoideum (Social amoeba).